The following is a 341-amino-acid chain: HTH-type transcriptional repressor PurR (341 aa).

The HTH lacI-type domain occupies 2–56 (ATIKDVAKRAGVSTTTVSHVINKTRFVAEETKAAVRAAIKELHYSPSAVARSLKV). Positions 4–23 (IKDVAKRAGVSTTTVSHVIN) form a DNA-binding region, H-T-H motif. The DNA-binding element occupies 48–56 (SAVARSLKV). Residues Y73, R190, T192, F221, and D275 each contribute to the hypoxanthine site.

As to quaternary structure, homodimer.

It participates in purine metabolism; purine nucleotide biosynthesis [regulation]. Its function is as follows. Is the main repressor of the genes involved in the de novo synthesis of purine nucleotides, regulating purB, purC, purEK, purF, purHD, purL, purMN and guaBA expression. PurR is allosterically activated to bind its cognate DNA by binding the purine corepressors, hypoxanthine or guanine, thereby effecting transcription repression. This is HTH-type transcriptional repressor PurR from Pectobacterium carotovorum subsp. carotovorum (strain PC1).